Reading from the N-terminus, the 253-residue chain is uncharacterized protein (253 aa).

Positions 1–19 are cleaved as a signal peptide; the sequence is MRYLKKVTIYISLLILVSG. Cys-20 carries N-palmitoyl cysteine lipidation. Cys-20 carries S-diacylglycerol cysteine lipidation.

Belongs to the staphylococcal tandem lipoprotein family.

It localises to the cell membrane. This is an uncharacterized protein from Staphylococcus epidermidis (strain ATCC 35984 / DSM 28319 / BCRC 17069 / CCUG 31568 / BM 3577 / RP62A).